The sequence spans 202 residues: Cryptic protein (202 aa).

The first 35 residues, 1–35 (MRANSPTQGISLKMHQARPLFLVTVALQLIGLGYS), serve as a signal peptide directing secretion. A glycan (N-linked (GlcNAc...) asparagine) is linked at Asn-65. Residues 94-123 (PVSRCCHNGGTCVLGSFCVCPAYFTGRYCE) form the EGF-like domain. 3 cysteine pairs are disulfide-bonded: Cys-98–Cys-105, Cys-99–Cys-111, and Cys-113–Cys-122. A lipid anchor (GPI-anchor amidated aspartate) is attached at Asp-166. A propeptide spans 167-202 (LKSFLSSGARGSRECSIPSLLLLVLCLLLQGVAGKG) (removed in mature form).

It belongs to the EGF-CFC (Cripto-1/FRL1/Cryptic) family. In terms of processing, N-glycosylated. No expressed in adult tissues.

The protein localises to the cell membrane. The protein resides in the secreted. In terms of biological role, nodal coreceptor involved in the correct establishment of the left-right axis. May play a role in mesoderm and/or neural patterning during gastrulation. This is Cryptic protein (Cfc1) from Mus musculus (Mouse).